A 657-amino-acid chain; its full sequence is tRNA 5-methylaminomethyl-2-thiouridine biosynthesis bifunctional protein MnmC (657 aa).

Residues 1-238 form a tRNA (mnm(5)s(2)U34)-methyltransferase region; sequence MPASTLLQHA…KWEVMSGEYT (238 aa). Residues 265 to 657 form an FAD-dependent cmnm(5)s(2)U34 oxidoreductase region; it reads IGAGLAGSAS…FGLRRLIRGK (393 aa).

In the N-terminal section; belongs to the methyltransferase superfamily. tRNA (mnm(5)s(2)U34)-methyltransferase family. This sequence in the C-terminal section; belongs to the DAO family. Requires FAD as cofactor.

It localises to the cytoplasm. It catalyses the reaction 5-aminomethyl-2-thiouridine(34) in tRNA + S-adenosyl-L-methionine = 5-methylaminomethyl-2-thiouridine(34) in tRNA + S-adenosyl-L-homocysteine + H(+). In terms of biological role, catalyzes the last two steps in the biosynthesis of 5-methylaminomethyl-2-thiouridine (mnm(5)s(2)U) at the wobble position (U34) in tRNA. Catalyzes the FAD-dependent demodification of cmnm(5)s(2)U34 to nm(5)s(2)U34, followed by the transfer of a methyl group from S-adenosyl-L-methionine to nm(5)s(2)U34, to form mnm(5)s(2)U34. The sequence is that of tRNA 5-methylaminomethyl-2-thiouridine biosynthesis bifunctional protein MnmC from Pseudomonas putida (strain W619).